A 538-amino-acid chain; its full sequence is Phosphoenolpyruvate carboxykinase (ATP) (538 aa).

Residues Arg-61, Tyr-195, and Lys-201 each contribute to the substrate site. Residues Lys-201, His-220, and 236 to 244 (GLSGTGKTT) contribute to the ATP site. 2 residues coordinate Mn(2+): Lys-201 and His-220. Position 257 (Asp-257) interacts with Mn(2+). Positions 285, 323, and 449 each coordinate ATP. Arg-323 is a binding site for substrate.

The protein belongs to the phosphoenolpyruvate carboxykinase (ATP) family. Mn(2+) serves as cofactor.

The protein resides in the cytoplasm. The catalysed reaction is oxaloacetate + ATP = phosphoenolpyruvate + ADP + CO2. Its pathway is carbohydrate biosynthesis; gluconeogenesis. Functionally, involved in the gluconeogenesis. Catalyzes the conversion of oxaloacetate (OAA) to phosphoenolpyruvate (PEP) through direct phosphoryl transfer between the nucleoside triphosphate and OAA. This Nitrobacter winogradskyi (strain ATCC 25391 / DSM 10237 / CIP 104748 / NCIMB 11846 / Nb-255) protein is Phosphoenolpyruvate carboxykinase (ATP).